Consider the following 360-residue polypeptide: Phospho-N-acetylmuramoyl-pentapeptide-transferase (360 aa).

10 helical membrane-spanning segments follow: residues 3 to 23, 52 to 72, 81 to 101, 115 to 135, 153 to 173, 187 to 207, 230 to 250, 254 to 274, 282 to 302, and 333 to 353; these read SILVGAAVALVVSILFTPYLI, MGGVAILVAMWAGYLVAHLTV, GLLVLGLTTALGIVGFLDDFI, AKLVGQLVASVLFAVLAMQFA, ITVISFGSVGFVIFAYIAISG, LAGGTAAMVLAIYVVISFWQF, IALVAGAAMAACVGFLWWNAA, IFMGDTGSLALGGLLAGLSMV, IIIGGLFVVEALSVVMQIVVF, and FWVLAAISAMFGLGLFYADWL.

Belongs to the glycosyltransferase 4 family. MraY subfamily. It depends on Mg(2+) as a cofactor.

It localises to the cell membrane. It carries out the reaction UDP-N-acetyl-alpha-D-muramoyl-L-alanyl-gamma-D-glutamyl-meso-2,6-diaminopimeloyl-D-alanyl-D-alanine + di-trans,octa-cis-undecaprenyl phosphate = di-trans,octa-cis-undecaprenyl diphospho-N-acetyl-alpha-D-muramoyl-L-alanyl-D-glutamyl-meso-2,6-diaminopimeloyl-D-alanyl-D-alanine + UMP. It participates in cell wall biogenesis; peptidoglycan biosynthesis. Its function is as follows. Catalyzes the initial step of the lipid cycle reactions in the biosynthesis of the cell wall peptidoglycan: transfers peptidoglycan precursor phospho-MurNAc-pentapeptide from UDP-MurNAc-pentapeptide onto the lipid carrier undecaprenyl phosphate, yielding undecaprenyl-pyrophosphoryl-MurNAc-pentapeptide, known as lipid I. The polypeptide is Phospho-N-acetylmuramoyl-pentapeptide-transferase (Saccharopolyspora erythraea (strain ATCC 11635 / DSM 40517 / JCM 4748 / NBRC 13426 / NCIMB 8594 / NRRL 2338)).